Consider the following 472-residue polypeptide: Calcitonin gene-related peptide type 1 receptor (472 aa).

Residues 1–28 form the signal peptide; the sequence is MGLLLRSALFKYIIIVLIMLNLRGYVLA. Over 29-149 the chain is Extracellular; sequence EQEQGSQIPL…FTHEKVKTAL (121 aa). 3 disulfides stabilise this stretch: C58–C84, C75–C115, and C98–C137. Residues N76, N128, and N133 are each glycosylated (N-linked (GlcNAc...) asparagine). The helical transmembrane segment at 150–174 threads the bilayer; the sequence is NLYYLTIIGHGLSIASLLISLGIFF. Topologically, residues 175-185 are cytoplasmic; it reads YFKNLSCQRIT. Residues 186–208 form a helical membrane-spanning segment; the sequence is LHKNLFFSFVCNSIITIISLSAV. Residues 209–219 lie on the Extracellular side of the membrane; sequence ANNQALVATNP. Residues 220–248 form a helical membrane-spanning segment; the sequence is VSCKISQFIHLYLMGCNYFWMLCEGIYLH. Over 249-262 the chain is Cytoplasmic; that stretch reads TLIVVAVFAEKQHL. A helical transmembrane segment spans residues 263–283; that stretch reads MWYYLLGWGFPLIPACIHAVA. Over 284-299 the chain is Extracellular; the sequence is RSLYYNDNCWISSETH. Residues 300-324 form a helical membrane-spanning segment; it reads LLYIIHGPICAALLVNLFFLLNIVR. Topologically, residues 325 to 339 are cytoplasmic; that stretch reads VLITKLKVTHQAESN. The helical transmembrane segment at 340–361 threads the bilayer; the sequence is LYMKAVRATLILVPLLGIEFVL. Residues 362-376 are Extracellular-facing; sequence FPWKPEGRIAEEIYD. The chain crosses the membrane as a helical span at residues 377-397; the sequence is YVMHILMHYQGLLVATIFCFF. Over 398-472 the chain is Cytoplasmic; that stretch reads NGEVQAVLKR…VFFKTEKQYM (75 aa).

The protein belongs to the G-protein coupled receptor 2 family.

It localises to the cell membrane. Functionally, may function as G protein-coupled receptor for calcitonin-gene-related peptides and adrenomedullin. Specificity may be modulated by accessory proteins. May activate cAMP-dependent pathway. This Xenopus tropicalis (Western clawed frog) protein is Calcitonin gene-related peptide type 1 receptor (calcrl).